Consider the following 672-residue polypeptide: DNA ligase (672 aa).

NAD(+) contacts are provided by residues 32–36 (DAEYD), 81–82 (SL), and glutamate 113. Lysine 115 (N6-AMP-lysine intermediate) is an active-site residue. Arginine 136, glutamate 173, lysine 290, and lysine 314 together coordinate NAD(+). Residues cysteine 408, cysteine 411, cysteine 426, and cysteine 432 each contribute to the Zn(2+) site. A BRCT domain is found at 594-672 (EIDSPFAGKT…EAEMLRLLGE (79 aa)).

This sequence belongs to the NAD-dependent DNA ligase family. LigA subfamily. The cofactor is Mg(2+). Mn(2+) serves as cofactor.

It carries out the reaction NAD(+) + (deoxyribonucleotide)n-3'-hydroxyl + 5'-phospho-(deoxyribonucleotide)m = (deoxyribonucleotide)n+m + AMP + beta-nicotinamide D-nucleotide.. Its function is as follows. DNA ligase that catalyzes the formation of phosphodiester linkages between 5'-phosphoryl and 3'-hydroxyl groups in double-stranded DNA using NAD as a coenzyme and as the energy source for the reaction. It is essential for DNA replication and repair of damaged DNA. The sequence is that of DNA ligase from Cronobacter sakazakii (strain ATCC BAA-894) (Enterobacter sakazakii).